Reading from the N-terminus, the 72-residue chain is Translation initiation factor IF-1 (72 aa).

The S1-like domain occupies 1 to 72 (MSKEEAIEVE…TRGRITYRAK (72 aa)).

Belongs to the IF-1 family. As to quaternary structure, component of the 30S ribosomal translation pre-initiation complex which assembles on the 30S ribosome in the order IF-2 and IF-3, IF-1 and N-formylmethionyl-tRNA(fMet); mRNA recruitment can occur at any time during PIC assembly.

The protein localises to the cytoplasm. Functionally, one of the essential components for the initiation of protein synthesis. Stabilizes the binding of IF-2 and IF-3 on the 30S subunit to which N-formylmethionyl-tRNA(fMet) subsequently binds. Helps modulate mRNA selection, yielding the 30S pre-initiation complex (PIC). Upon addition of the 50S ribosomal subunit IF-1, IF-2 and IF-3 are released leaving the mature 70S translation initiation complex. The polypeptide is Translation initiation factor IF-1 (Geotalea uraniireducens (strain Rf4) (Geobacter uraniireducens)).